We begin with the raw amino-acid sequence, 386 residues long: DNA methyltransferase CcrM (386 aa).

Residues 280-382 (LGKAELTVMT…LRKIIREQMA (103 aa)) enclose the RAMA domain.

The protein belongs to the N(4)/N(6)-methyltransferase family.

It carries out the reaction a 2'-deoxyadenosine in DNA + S-adenosyl-L-methionine = an N(6)-methyl-2'-deoxyadenosine in DNA + S-adenosyl-L-homocysteine + H(+). A beta subtype methylase that recognizes the double-stranded sequence 5'-GANTC-3' and methylates A-2 on both strands. CcrM-mediated methylation has important cellular functions. Contributes to the accurate cell-cycle control of DNA replication and cellular morphology. The polypeptide is DNA methyltransferase CcrM (ccrM) (Brucella ovis (strain ATCC 25840 / 63/290 / NCTC 10512)).